The sequence spans 229 residues: ATP synthase subunit a (229 aa).

6 consecutive transmembrane segments (helical) span residues 16 to 36 (YAHVATLGIATVAAVGIGAAA), 81 to 101 (YIPFFASVFFFILFNNLLGMI), 110 to 130 (NMNTTFGFGVLMFLFYNFQGV), 142 to 162 (FMGPVIFLAPLMFVIEIVSHI), 175 to 195 (VMMGDHTVLSVFLDLVPIGVP), and 196 to 216 (IPFYVMGLFVCFVQAFVFTLL).

This sequence belongs to the ATPase A chain family. As to quaternary structure, F-type ATPases have 2 components, CF(1) - the catalytic core - and CF(0) - the membrane proton channel. CF(1) has five subunits: alpha(3), beta(3), gamma(1), delta(1), epsilon(1). CF(0) has three main subunits: a(1), b(2) and c(9-12). The alpha and beta chains form an alternating ring which encloses part of the gamma chain. CF(1) is attached to CF(0) by a central stalk formed by the gamma and epsilon chains, while a peripheral stalk is formed by the delta and b chains.

It localises to the cell inner membrane. Functionally, key component of the proton channel; it plays a direct role in the translocation of protons across the membrane. In Bdellovibrio bacteriovorus (strain ATCC 15356 / DSM 50701 / NCIMB 9529 / HD100), this protein is ATP synthase subunit a.